A 596-amino-acid polypeptide reads, in one-letter code: MARLGLAVCAASFHLFLLLASTSSLRRAPTEADTANHARRTAYHFQPAKNWQNDPNGPMYHNGMYHLFYQYNPHSALWDIGNLSWGHSVSGDLLNWAALDTALDPTSPFDANGCWSGSATILPGALPAILYTGIDASKEQVQNVAFAKNPSDPLLREWEKPAYNPVIALPADVPGDKFRDPSTAWLGRDGLWRIAVSAEVDGVASTLVYRSKDFVRWERNAAPLHASRAAGMVECPDLFPVAERGEDGLDTSANGAGGVRHVLKLSVMDTLQDYYMVGTYDDAADAFSPAEPERGDDCRSWRRLDYGHLYASKSFFDVRKNRRVLWAWANESDSQADDVARGWSGVQTFPRKMWLAKDGKQLLQWPIEEIETLRRKRAGLWRGTRLGVGAVQEIVGVASSQADVEVVFKIPSLEEAERVDDPNRLLDPQKLCGEKGAAVRGGVGPFGLLVMASGDLHEHTAVFFRVFRHHDKYKLLMCTDLTKSSTRAGVYKPAYGGFVDMDIDDHKTISLRTLIDHSVVESFGGGGRACITARVYPEHVATSSSHLYVFNNGSDAVKVAKLEAWDLATATVNVVVGDHHGLVAPALELEPTRTTQ.

The first 24 residues, 1-24, serve as a signal peptide directing secretion; sequence MARLGLAVCAASFHLFLLLASTSS. Residues 51-54, Gln70, and Trp78 contribute to the substrate site; that span reads WQND. Residue Asp54 is part of the active site. Asn82 carries an N-linked (GlcNAc...) asparagine glycan. Residues 115–116, 179–180, and Glu234 each bind substrate; these read WS and RD. A glycan (N-linked (GlcNAc...) asparagine) is linked at Asn330. Cys432 and Cys478 are oxidised to a cystine. Asn552 carries an N-linked (GlcNAc...) asparagine glycan.

It belongs to the glycosyl hydrolase 32 family.

Its subcellular location is the secreted. It is found in the extracellular space. It localises to the apoplast. The protein resides in the cell wall. It catalyses the reaction Hydrolysis of terminal non-reducing beta-D-fructofuranoside residues in beta-D-fructofuranosides.. May play a role in sucrose partitioning during seed development. The polypeptide is Beta-fructofuranosidase, insoluble isoenzyme 7 (CIN7) (Oryza sativa subsp. indica (Rice)).